Reading from the N-terminus, the 346-residue chain is Holliday junction branch migration complex subunit RuvB (346 aa).

Residues 1–11 (MTEQRTIASSA) show a composition bias toward polar residues. Positions 1–20 (MTEQRTIASSATREDEAADA) are disordered. A large ATPase domain (RuvB-L) region spans residues 1 to 183 (MTEQRTIASS…FGIVQRLEFY (183 aa)). ATP is bound by residues I22, R23, G64, K67, T68, T69, 130 to 132 (EDF), R173, Y183, and R220. Position 68 (T68) interacts with Mg(2+). A small ATPAse domain (RuvB-S) region spans residues 184–254 (SPQELTRIVI…VAQAAMQMLK (71 aa)). The head domain (RuvB-H) stretch occupies residues 257–346 (PEGFDELDRR…PAIGEPGDLF (90 aa)). DNA contacts are provided by R293, R312, and R317.

This sequence belongs to the RuvB family. In terms of assembly, homohexamer. Forms an RuvA(8)-RuvB(12)-Holliday junction (HJ) complex. HJ DNA is sandwiched between 2 RuvA tetramers; dsDNA enters through RuvA and exits via RuvB. An RuvB hexamer assembles on each DNA strand where it exits the tetramer. Each RuvB hexamer is contacted by two RuvA subunits (via domain III) on 2 adjacent RuvB subunits; this complex drives branch migration. In the full resolvosome a probable DNA-RuvA(4)-RuvB(12)-RuvC(2) complex forms which resolves the HJ.

It localises to the cytoplasm. The enzyme catalyses ATP + H2O = ADP + phosphate + H(+). The RuvA-RuvB-RuvC complex processes Holliday junction (HJ) DNA during genetic recombination and DNA repair, while the RuvA-RuvB complex plays an important role in the rescue of blocked DNA replication forks via replication fork reversal (RFR). RuvA specifically binds to HJ cruciform DNA, conferring on it an open structure. The RuvB hexamer acts as an ATP-dependent pump, pulling dsDNA into and through the RuvAB complex. RuvB forms 2 homohexamers on either side of HJ DNA bound by 1 or 2 RuvA tetramers; 4 subunits per hexamer contact DNA at a time. Coordinated motions by a converter formed by DNA-disengaged RuvB subunits stimulates ATP hydrolysis and nucleotide exchange. Immobilization of the converter enables RuvB to convert the ATP-contained energy into a lever motion, pulling 2 nucleotides of DNA out of the RuvA tetramer per ATP hydrolyzed, thus driving DNA branch migration. The RuvB motors rotate together with the DNA substrate, which together with the progressing nucleotide cycle form the mechanistic basis for DNA recombination by continuous HJ branch migration. Branch migration allows RuvC to scan DNA until it finds its consensus sequence, where it cleaves and resolves cruciform DNA. The polypeptide is Holliday junction branch migration complex subunit RuvB (Xanthomonas campestris pv. campestris (strain ATCC 33913 / DSM 3586 / NCPPB 528 / LMG 568 / P 25)).